The sequence spans 375 residues: Period circadian protein (375 aa).

Disordered regions lie at residues T28–P118, K140–E189, and C220–A254. A compositionally biased stretch (low complexity) spans S69–T91. Residues G92–N113 show a composition bias toward gly residues. Residues R145–A156 show a composition bias toward basic and acidic residues. Residues G224 to G243 are compositionally biased toward gly residues. Residues N245–A254 are compositionally biased toward polar residues.

As to quaternary structure, forms a heterodimer with timeless (TIM); the complex then translocates into the nucleus. In terms of processing, phosphorylated with a circadian rhythmicity, probably by the double-time protein (dbt). Phosphorylation could be implicated in the stability of per monomer and in the formation of heterodimer per-tim.

The protein resides in the nucleus. Its subcellular location is the cytoplasm. It is found in the perinuclear region. Essential for biological clock functions. Determines the period length of circadian and ultradian rhythms; an increase in PER dosage leads to shortened circadian rhythms and a decrease leads to lengthened circadian rhythms. Essential for the circadian rhythmicity of locomotor activity, eclosion behavior, and for the rhythmic component of the male courtship song that originates in the thoracic nervous system. The biological cycle depends on the rhythmic formation and nuclear localization of the TIM-PER complex. Light induces the degradation of TIM, which promotes elimination of PER. Nuclear activity of the heterodimer coordinatively regulates PER and TIM transcription through a negative feedback loop. Behaves as a negative element in circadian transcriptional loop. Does not appear to bind DNA, suggesting indirect transcriptional inhibition. The polypeptide is Period circadian protein (per) (Drosophila capricorni (Fruit fly)).